Consider the following 161-residue polypeptide: Transcription elongation factor GreA (161 aa).

Positions 46 to 71 form a coiled coil; it reads AEYTAAKEKQSFLHGKLQELENNLAL.

The protein belongs to the GreA/GreB family.

Necessary for efficient RNA polymerase transcription elongation past template-encoded arresting sites. The arresting sites in DNA have the property of trapping a certain fraction of elongating RNA polymerases that pass through, resulting in locked ternary complexes. Cleavage of the nascent transcript by cleavage factors such as GreA or GreB allows the resumption of elongation from the new 3'terminus. GreA releases sequences of 2 to 3 nucleotides. This chain is Transcription elongation factor GreA, found in Syntrophus aciditrophicus (strain SB).